Here is a 209-residue protein sequence, read N- to C-terminus: Probable GTP-binding protein EngB (209 aa).

The 176-residue stretch at 23 to 198 (NGAEIAFAGR…EKVVAGWLVP (176 aa)) folds into the EngB-type G domain. Residues 31–38 (GRSNAGKS), 58–62 (GRTQL), 76–79 (DLPG), 143–146 (TKSD), and 177–179 (FSS) each bind GTP. Mg(2+) is bound by residues serine 38 and threonine 60.

The protein belongs to the TRAFAC class TrmE-Era-EngA-EngB-Septin-like GTPase superfamily. EngB GTPase family. Mg(2+) is required as a cofactor.

Its function is as follows. Necessary for normal cell division and for the maintenance of normal septation. This Azoarcus sp. (strain BH72) protein is Probable GTP-binding protein EngB.